The sequence spans 1189 residues: Tyrosine-protein phosphatase non-receptor type 14 (1189 aa).

The 286-residue stretch at 21–306 folds into the FERM domain; that stretch reads FVTRIRLLDS…TRHKFYKQNK (286 aa). Phosphoserine occurs at positions 314, 461, 486, 591, 593, 594, and 646. A disordered region spans residues 744 to 775; it reads ARIPNRPPPEYPGPRKSVSNGALRQDQGTPLP. Positions 760–771 are enriched in polar residues; sequence SVSNGALRQDQG. Position 833 is a phosphoserine (Ser833). One can recognise a Tyrosine-protein phosphatase domain in the interval 911 to 1182; the sequence is VFTEYEQIPN…KFVYQVLVQF (272 aa). The Phosphocysteine intermediate role is filled by Cys1123. Substrate contacts are provided by residues 1123 to 1129 and Gln1167; that span reads CSAGVGR.

This sequence belongs to the protein-tyrosine phosphatase family. Non-receptor class subfamily. In terms of assembly, interacts with FLT4; the interaction is enhanced by stimulation with VEGFC. Interacts (via PPxY motifs) with YAP1 (via WW domains); this interaction leads to the cytoplasmic sequestration of YAP1 and inhibits its transcriptional coactivator activity. Ubiquitinated by the ECS (Elongin BC-CUL2/5-SOCS-box protein)/LRR1 E3 ligase complex and subsequently targeted to proteasomal degradation. As to expression, thymus; in cells of both hematopoietic and non-hematopoietic origins.

Its subcellular location is the cytoplasm. It localises to the cytoskeleton. The protein resides in the nucleus. The catalysed reaction is O-phospho-L-tyrosyl-[protein] + H2O = L-tyrosyl-[protein] + phosphate. Its function is as follows. Protein tyrosine phosphatase which may play a role in the regulation of lymphangiogenesis, cell-cell adhesion, cell-matrix adhesion, cell migration, cell growth and also regulates TGF-beta gene expression, thereby modulating epithelial-mesenchymal transition. Mediates beta-catenin dephosphorylation at adhesion junctions. Acts as a negative regulator of the oncogenic property of YAP, a downstream target of the hippo pathway, in a cell density-dependent manner. May function as a tumor suppressor. The protein is Tyrosine-protein phosphatase non-receptor type 14 (Ptpn14) of Mus musculus (Mouse).